Consider the following 184-residue polypeptide: GMP synthase [glutamine-hydrolyzing] subunit A (184 aa).

The 182-residue stretch at 3–184 (PICVVNNYGQ…YENFDAICTE (182 aa)) folds into the Glutamine amidotransferase type-1 domain. Cysteine 75 (nucleophile) is an active-site residue. Active-site residues include histidine 162 and glutamate 164.

Heterodimer composed of a glutamine amidotransferase subunit (A) and a GMP-binding subunit (B).

The enzyme catalyses XMP + L-glutamine + ATP + H2O = GMP + L-glutamate + AMP + diphosphate + 2 H(+). It participates in purine metabolism; GMP biosynthesis; GMP from XMP (L-Gln route): step 1/1. Functionally, catalyzes the synthesis of GMP from XMP. This chain is GMP synthase [glutamine-hydrolyzing] subunit A, found in Methanoregula boonei (strain DSM 21154 / JCM 14090 / 6A8).